A 326-amino-acid polypeptide reads, in one-letter code: Acyl-CoA-binding domain-containing protein 4 (326 aa).

Residues 10-99 (CQKQFQAAVS…MKLVAQKVID (90 aa)) form the ACB domain. An acyl-CoA contacts are provided by residues 21 to 30 (IQNLPKNGSY), 41 to 45 (YSYYK), K67, and Y86. Disordered regions lie at residues 147–170 (VQAA…SRLP) and 223–248 (KEAA…SLMG). S164 is modified (phosphoserine).

Its function is as follows. Binds medium- and long-chain acyl-CoA esters and may function as an intracellular carrier of acyl-CoA esters. The protein is Acyl-CoA-binding domain-containing protein 4 (Acbd4) of Rattus norvegicus (Rat).